The primary structure comprises 109 residues: Cell division protein FtsL (109 aa).

At 1–3 (MSR) the chain is on the cytoplasmic side. A helical membrane pass occupies residues 4–21 (LNIFLLIIVMGCALSVVN). The Periplasmic portion of the chain corresponds to 22–109 (STNQQRQIFI…ASAAPTGGAR (88 aa)).

This sequence belongs to the FtsL family. As to quaternary structure, part of a complex composed of FtsB, FtsL and FtsQ.

The protein resides in the cell inner membrane. Its function is as follows. Essential cell division protein. May link together the upstream cell division proteins, which are predominantly cytoplasmic, with the downstream cell division proteins, which are predominantly periplasmic. This Burkholderia pseudomallei (strain K96243) protein is Cell division protein FtsL.